A 205-amino-acid chain; its full sequence is Holliday junction branch migration complex subunit RuvA (205 aa).

The tract at residues 1 to 64 (MIGRLSGILV…EDAQLLYGFI (64 aa)) is domain I. The domain II stretch occupies residues 65 to 143 (TKQERALFRL…SLLEASAGSE (79 aa)). The flexible linker stretch occupies residues 144-156 (REFMLQSNYTPAA). A domain III region spans residues 157-205 (AVDSAEEDAISALLSLGYKPAQASKSVSAAFKEGMSSETLIKAALKSML).

Belongs to the RuvA family. In terms of assembly, homotetramer. Forms an RuvA(8)-RuvB(12)-Holliday junction (HJ) complex. HJ DNA is sandwiched between 2 RuvA tetramers; dsDNA enters through RuvA and exits via RuvB. An RuvB hexamer assembles on each DNA strand where it exits the tetramer. Each RuvB hexamer is contacted by two RuvA subunits (via domain III) on 2 adjacent RuvB subunits; this complex drives branch migration. In the full resolvosome a probable DNA-RuvA(4)-RuvB(12)-RuvC(2) complex forms which resolves the HJ.

It is found in the cytoplasm. Its function is as follows. The RuvA-RuvB-RuvC complex processes Holliday junction (HJ) DNA during genetic recombination and DNA repair, while the RuvA-RuvB complex plays an important role in the rescue of blocked DNA replication forks via replication fork reversal (RFR). RuvA specifically binds to HJ cruciform DNA, conferring on it an open structure. The RuvB hexamer acts as an ATP-dependent pump, pulling dsDNA into and through the RuvAB complex. HJ branch migration allows RuvC to scan DNA until it finds its consensus sequence, where it cleaves and resolves the cruciform DNA. The polypeptide is Holliday junction branch migration complex subunit RuvA (Shewanella frigidimarina (strain NCIMB 400)).